The chain runs to 430 residues: uncharacterized protein (430 aa).

Transmembrane regions (helical) follow at residues 20–40 and 405–425; these read YLCL…GIMP and YIWW…LLVI.

The protein resides in the membrane. This is an uncharacterized protein from Schizosaccharomyces pombe (strain 972 / ATCC 24843) (Fission yeast).